The primary structure comprises 346 residues: UDP-N-acetylenolpyruvoylglucosamine reductase (346 aa).

The FAD-binding PCMH-type domain maps to 23-194 (FDVRAQFACR…TSVTFRLPKV (172 aa)). Arg170 is a catalytic residue. Ser246 acts as the Proton donor in catalysis. Glu342 is an active-site residue.

This sequence belongs to the MurB family. FAD serves as cofactor.

Its subcellular location is the cytoplasm. The enzyme catalyses UDP-N-acetyl-alpha-D-muramate + NADP(+) = UDP-N-acetyl-3-O-(1-carboxyvinyl)-alpha-D-glucosamine + NADPH + H(+). It functions in the pathway cell wall biogenesis; peptidoglycan biosynthesis. Functionally, cell wall formation. The chain is UDP-N-acetylenolpyruvoylglucosamine reductase from Paraburkholderia phytofirmans (strain DSM 17436 / LMG 22146 / PsJN) (Burkholderia phytofirmans).